We begin with the raw amino-acid sequence, 72 residues long: Translation initiation factor IF-1 (72 aa).

The S1-like domain occupies 1–72 (MSKQDVIEFD…TKGRITYRGK (72 aa)).

It belongs to the IF-1 family. In terms of assembly, component of the 30S ribosomal translation pre-initiation complex which assembles on the 30S ribosome in the order IF-2 and IF-3, IF-1 and N-formylmethionyl-tRNA(fMet); mRNA recruitment can occur at any time during PIC assembly.

The protein localises to the cytoplasm. In terms of biological role, one of the essential components for the initiation of protein synthesis. Stabilizes the binding of IF-2 and IF-3 on the 30S subunit to which N-formylmethionyl-tRNA(fMet) subsequently binds. Helps modulate mRNA selection, yielding the 30S pre-initiation complex (PIC). Upon addition of the 50S ribosomal subunit IF-1, IF-2 and IF-3 are released leaving the mature 70S translation initiation complex. This is Translation initiation factor IF-1 from Hydrogenovibrio crunogenus (strain DSM 25203 / XCL-2) (Thiomicrospira crunogena).